Consider the following 330-residue polypeptide: Aspartate--ammonia ligase (330 aa).

This sequence belongs to the class-II aminoacyl-tRNA synthetase family. AsnA subfamily.

Its subcellular location is the cytoplasm. The catalysed reaction is L-aspartate + NH4(+) + ATP = L-asparagine + AMP + diphosphate + H(+). It participates in amino-acid biosynthesis; L-asparagine biosynthesis; L-asparagine from L-aspartate (ammonia route): step 1/1. This Streptococcus thermophilus (strain CNRZ 1066) protein is Aspartate--ammonia ligase.